The primary structure comprises 813 residues: Homeobox-leucine zipper protein ROC4 (813 aa).

The segment at 62 to 112 (EVENEMSRSGSDHLDVVSCGDAGGGGGDDDDDEDAEHGNPPKRKKRYHRHT) is disordered. Over residues 101–112 (PPKRKKRYHRHT) the composition is skewed to basic residues. Residues 104 to 163 (RKKRYHRHTPQQIQELEAMFKECPHPDEKQRAELSKRLGLEPRQVKFWFQNRRTQMKMQL) constitute a DNA-binding region (homeobox). Residues 152 to 191 (FQNRRTQMKMQLERHENSLLKQENDKLRSENLSIREATSN) adopt a coiled-coil conformation. The region spanning 306–559 (AGIDKSLFLE…LQRQCECLAL (254 aa)) is the START domain.

Belongs to the HD-ZIP homeobox family. Class IV subfamily.

Its subcellular location is the nucleus. Probable transcription factor. This chain is Homeobox-leucine zipper protein ROC4 (ROC4), found in Oryza sativa subsp. japonica (Rice).